A 209-amino-acid chain; its full sequence is Uridine kinase (209 aa).

12 to 19 (GGSASGKT) contributes to the ATP binding site.

The protein belongs to the uridine kinase family.

It localises to the cytoplasm. It catalyses the reaction uridine + ATP = UMP + ADP + H(+). It carries out the reaction cytidine + ATP = CMP + ADP + H(+). Its pathway is pyrimidine metabolism; CTP biosynthesis via salvage pathway; CTP from cytidine: step 1/3. It participates in pyrimidine metabolism; UMP biosynthesis via salvage pathway; UMP from uridine: step 1/1. The chain is Uridine kinase from Chloroflexus aurantiacus (strain ATCC 29366 / DSM 635 / J-10-fl).